The chain runs to 233 residues: MARKVVVVDDEKPIADILEFNLKKEGYDVYCAYDGNDAVDLIYEEEPDIVLLDIMLPGRDGMEVCREVRKKFEMPIIMLTAKDSEIDKVLGLELGADDYVTKPFSTRELIARVKANLRRHYSQPAQEVSGTTNEITIKDIVIYPDAYSIKKRGEDIELTHREFELFHYLSKHMGQVMTREHLLQTVWGYDYFGDVRTVDVTIRRLREKIEDDPSHPEYIVTRRGVGYFLQQHD.

Positions 4 to 117 (KVVVVDDEKP…ELIARVKANL (114 aa)) constitute a Response regulatory domain. Aspartate 53 is subject to 4-aspartylphosphate. Residues 132–231 (TNEITIKDIV…RRGVGYFLQQ (100 aa)) constitute a DNA-binding region (ompR/PhoB-type).

Phosphorylated by WalK.

The protein localises to the cytoplasm. In terms of biological role, member of the two-component regulatory system WalK/WalR. The polypeptide is Transcriptional regulatory protein WalR (walR) (Staphylococcus haemolyticus (strain JCSC1435)).